A 99-amino-acid polypeptide reads, in one-letter code: Aspartyl/glutamyl-tRNA(Asn/Gln) amidotransferase subunit C (99 aa).

It belongs to the GatC family. In terms of assembly, heterotrimer of A, B and C subunits.

It catalyses the reaction L-glutamyl-tRNA(Gln) + L-glutamine + ATP + H2O = L-glutaminyl-tRNA(Gln) + L-glutamate + ADP + phosphate + H(+). The catalysed reaction is L-aspartyl-tRNA(Asn) + L-glutamine + ATP + H2O = L-asparaginyl-tRNA(Asn) + L-glutamate + ADP + phosphate + 2 H(+). In terms of biological role, allows the formation of correctly charged Asn-tRNA(Asn) or Gln-tRNA(Gln) through the transamidation of misacylated Asp-tRNA(Asn) or Glu-tRNA(Gln) in organisms which lack either or both of asparaginyl-tRNA or glutaminyl-tRNA synthetases. The reaction takes place in the presence of glutamine and ATP through an activated phospho-Asp-tRNA(Asn) or phospho-Glu-tRNA(Gln). This is Aspartyl/glutamyl-tRNA(Asn/Gln) amidotransferase subunit C from Delftia acidovorans (strain DSM 14801 / SPH-1).